Reading from the N-terminus, the 928-residue chain is Isoleucine--tRNA ligase (928 aa).

The short motif at 57–67 (PFANGNIHMGH) is the 'HIGH' region element. E552 contributes to the L-isoleucyl-5'-AMP binding site. Residues 593 to 597 (KMSKS) carry the 'KMSKS' region motif. K596 is a binding site for ATP. C887, C890, C907, and C910 together coordinate Zn(2+).

The protein belongs to the class-I aminoacyl-tRNA synthetase family. IleS type 1 subfamily. As to quaternary structure, monomer. Zn(2+) serves as cofactor.

The protein resides in the cytoplasm. The enzyme catalyses tRNA(Ile) + L-isoleucine + ATP = L-isoleucyl-tRNA(Ile) + AMP + diphosphate. In terms of biological role, catalyzes the attachment of isoleucine to tRNA(Ile). As IleRS can inadvertently accommodate and process structurally similar amino acids such as valine, to avoid such errors it has two additional distinct tRNA(Ile)-dependent editing activities. One activity is designated as 'pretransfer' editing and involves the hydrolysis of activated Val-AMP. The other activity is designated 'posttransfer' editing and involves deacylation of mischarged Val-tRNA(Ile). This Lacticaseibacillus casei (strain BL23) (Lactobacillus casei) protein is Isoleucine--tRNA ligase.